A 282-amino-acid chain; its full sequence is Energy-coupling factor transporter ATP-binding protein EcfA1 (282 aa).

The ABC transporter domain maps to 9-243; sequence IEIDNLSFKY…NDELLNIGLD (235 aa). 43–50 contributes to the ATP binding site; sequence GHNGSGKS.

Belongs to the ABC transporter superfamily. Energy-coupling factor EcfA family. In terms of assembly, forms a stable energy-coupling factor (ECF) transporter complex composed of 2 membrane-embedded substrate-binding proteins (S component), 2 ATP-binding proteins (A component) and 2 transmembrane proteins (T component).

It localises to the cell membrane. ATP-binding (A) component of a common energy-coupling factor (ECF) ABC-transporter complex. Unlike classic ABC transporters this ECF transporter provides the energy necessary to transport a number of different substrates. The protein is Energy-coupling factor transporter ATP-binding protein EcfA1 of Ligilactobacillus salivarius (strain UCC118) (Lactobacillus salivarius).